The sequence spans 172 residues: UPF0102 protein Pcryo_2198 (172 aa).

This sequence belongs to the UPF0102 family.

The chain is UPF0102 protein Pcryo_2198 from Psychrobacter cryohalolentis (strain ATCC BAA-1226 / DSM 17306 / VKM B-2378 / K5).